A 203-amino-acid polypeptide reads, in one-letter code: E3 ubiquitin-protein ligase RNF152 (203 aa).

The RING-type zinc finger occupies 12-55; that stretch reads CQICFNYYSPRRRPKLLDCKHTCCSVCLQQMRTSQKDVRCPWCR. The segment at 106-165 is necessary for interaction with RRAGA; sequence ISKERTLLPGDMGCRLLPGSQQKSLTVVTIPAEQQPLQGGAPPEAVEEEPDRRGVVKSST. The interval 139-158 is disordered; it reads QQPLQGGAPPEAVEEEPDRR. The helical transmembrane segment at 167–187 threads the bilayer; sequence SGVCTVILVACVLVFLLGIVL.

Belongs to the RNF152 family. As to quaternary structure, interacts with RRAGA (inactive GDP-bound form); stimulated by amino acid starvation. Interacts with SEC16A. Post-translationally, ubiquitinated. Autoubiquitinated in vitro, leading to its degradation by the proteasome.

It is found in the lysosome membrane. It catalyses the reaction S-ubiquitinyl-[E2 ubiquitin-conjugating enzyme]-L-cysteine + [acceptor protein]-L-lysine = [E2 ubiquitin-conjugating enzyme]-L-cysteine + N(6)-ubiquitinyl-[acceptor protein]-L-lysine.. The protein operates within protein modification; protein ubiquitination. Functionally, E3 ubiquitin-protein ligase that acts as a negative regulator of mTORC1 signaling by mediating ubiquitination of RagA/RRAGA and RHEB. Catalyzes 'Lys-63'-linked polyubiquitination of RagA/RRAGA in response to amino acid starvation, thereby regulating mTORC1 signaling. Also mediates monoubiquitination of RHEB, promoting its association with the TSC-TBC complex and subsequent inhibition. Also mediates 'Lys-48'-linked polyubiquitination of target proteins and their subsequent targeting to the proteasome for degradation. Induces apoptosis when overexpressed. This chain is E3 ubiquitin-protein ligase RNF152, found in Mus musculus (Mouse).